Reading from the N-terminus, the 598-residue chain is NADH-quinone oxidoreductase subunit C/D (598 aa).

Residues 1 to 190 (MSIFTQEVSA…EAFSLDDERL (190 aa)) form an NADH dehydrogenase I subunit C region. The NADH dehydrogenase I subunit D stretch occupies residues 214-598 (DYLFLNLGPN…IDFVMADVDR (385 aa)).

This sequence in the N-terminal section; belongs to the complex I 30 kDa subunit family. The protein in the C-terminal section; belongs to the complex I 49 kDa subunit family. NDH-1 is composed of 13 different subunits. Subunits NuoB, CD, E, F, and G constitute the peripheral sector of the complex.

It localises to the cell inner membrane. The catalysed reaction is a quinone + NADH + 5 H(+)(in) = a quinol + NAD(+) + 4 H(+)(out). NDH-1 shuttles electrons from NADH, via FMN and iron-sulfur (Fe-S) centers, to quinones in the respiratory chain. The immediate electron acceptor for the enzyme in this species is believed to be ubiquinone. Couples the redox reaction to proton translocation (for every two electrons transferred, four hydrogen ions are translocated across the cytoplasmic membrane), and thus conserves the redox energy in a proton gradient. The polypeptide is NADH-quinone oxidoreductase subunit C/D (Shewanella woodyi (strain ATCC 51908 / MS32)).